Reading from the N-terminus, the 334-residue chain is Formamidase (334 aa).

Positions 14–260 (FLVAAIQFPV…WEIVTGEIYP (247 aa)) constitute a CN hydrolase domain. Glu60 (proton acceptor) is an active-site residue. Lys133 acts as the Proton donor in catalysis. Cys166 (nucleophile) is an active-site residue.

It belongs to the carbon-nitrogen hydrolase superfamily. Aliphatic amidase family.

The catalysed reaction is formamide + H2O = formate + NH4(+). Is an aliphatic amidase with a restricted substrate specificity, as it only hydrolyzes formamide. The sequence is that of Formamidase from Helicobacter pylori (strain G27).